Consider the following 498-residue polypeptide: ATP synthase subunit beta, chloroplastic (498 aa).

Glycine 172–threonine 179 serves as a coordination point for ATP.

The protein belongs to the ATPase alpha/beta chains family. As to quaternary structure, F-type ATPases have 2 components, CF(1) - the catalytic core - and CF(0) - the membrane proton channel. CF(1) has five subunits: alpha(3), beta(3), gamma(1), delta(1), epsilon(1). CF(0) has four main subunits: a(1), b(1), b'(1) and c(9-12).

The protein localises to the plastid. It is found in the chloroplast thylakoid membrane. It catalyses the reaction ATP + H2O + 4 H(+)(in) = ADP + phosphate + 5 H(+)(out). Produces ATP from ADP in the presence of a proton gradient across the membrane. The catalytic sites are hosted primarily by the beta subunits. The sequence is that of ATP synthase subunit beta, chloroplastic from Carica papaya (Papaya).